The following is a 598-amino-acid chain: uncharacterized protein (598 aa).

Positions 39-322 (LIMVFVFVTV…LSNQFNMIQM (284 aa)) constitute an ABC transmembrane type-1 domain. Helical transmembrane passes span 40–60 (IMVFVFVTVSSILGVLSPYLI), 80–100 (MLILGTIYALTSLLFWLQGKI), 150–170 (VLGNSIIQFFSGIVTLAGAVI), 177–197 (VILSLVTLSIVPLTVLITQIV), and 273–293 (LGFALISGFGGWLALKDIITV). In terms of domain architecture, ABC transporter spans 355–589 (IEFKNVWFSY…RGFYYELFTS (235 aa)). 388–395 (GPTGSGKT) is an ATP binding site.

It belongs to the ABC transporter superfamily.

Its subcellular location is the cell membrane. This is an uncharacterized protein from Thermotoga maritima (strain ATCC 43589 / DSM 3109 / JCM 10099 / NBRC 100826 / MSB8).